We begin with the raw amino-acid sequence, 907 residues long: MTIIFVDNEEYNVDKSDNLLQACLSSGINIPYFCWHPVLGSIGSCRQCAVTIYKDLEDKVGQLVMSCMTSVLDGMIVSTSDKISRNFRKGIIELLMLNHPHDCPICEEGGSCHLQDMTVMAGHTVRRYRFTKRTHKNQYLGHFITHEMNRCISCYRCVRYYKDYSGGTDLGVFGISNNVYFGRYNDGCLESEFSGNLVEVCPTGVFTDKTYSKKYSRKWDMQYAPSICQHCCVGCNISVGEKYGKISRIENRYHNAINHYFLCDLGRFSYDYSNVDERLTYSIYRSQNKTKIINDVNKTIDKLAMKFKKSSKIIGIGSCRASVESNFSLQKLVGSENFYLGISQKEYDCLMLIKDILKDNQIHVPTLREIEKSDVIFLLGEDVTKTSPLIALSIRQSIKGQVKTQDVSKNIPIWHADAVKNSFRNNKNKLFITNLMNSSLDDIADESYYASTFDQVLLGAEVYKCISNNCISNVTLLKQDLLSCAKRIATALTLSKCPLIISGSHSYNLDLIKVSFNIAKSLKVIGKNVGLILLSSNVNSIGVSLLEGISIEKVINKVLLKQIDKIIVLENDLYRYLPESIVDTLFKSSSCTVVIDHLNTRTLKQADIAIPTCNSFESSGTVVNYEGRAQRFFKTYHPNSSENKKSILESWKWLHLLYCKLHKISVFWHSLDDVIEEISLKIFSFSKLKDVAPNSSFKIFGQKLARSHHRASGRTALYSNINIHEPRPPQDNDTMFSFSMEGCQNVQNYLPYVPFSWFPGWNSVQSWNTYKKINNENYGKHLFQDTTKFVLTYYKLNCKNVNKIEDLYLIVPCYFLFCNNELAQYSPVIQENVLKNAYGIINTEDAKVLLIESGSKIEFSYLNKNFSIKVQLSKEFKKGQLGLPLGMADFPFFLAEKQVKVFRKISI.

A 2Fe-2S ferredoxin-type domain is found at 1 to 83 (MTIIFVDNEE…GMIVSTSDKI (83 aa)). 4 residues coordinate [2Fe-2S] cluster: cysteine 34, cysteine 45, cysteine 48, and cysteine 67. One can recognise a 4Fe-4S His(Cys)3-ligated-type domain in the interval 83–122 (ISRNFRKGIIELLMLNHPHDCPICEEGGSCHLQDMTVMAG). The [4Fe-4S] cluster site is built by histidine 99, cysteine 103, cysteine 106, cysteine 112, cysteine 151, cysteine 154, cysteine 157, cysteine 201, cysteine 228, cysteine 231, cysteine 235, and cysteine 263. The 57-residue stretch at 221–277 (MQYAPSICQHCCVGCNISVGEKYGKISRIENRYHNAINHYFLCDLGRFSYDYSNVDE) folds into the 4Fe-4S Mo/W bis-MGD-type domain.

Belongs to the complex I 75 kDa subunit family. Composed of 13 different subunits. Subunits NuoCD, E, F, and G constitute the peripheral sector of the complex. Requires [2Fe-2S] cluster as cofactor. [4Fe-4S] cluster is required as a cofactor.

The catalysed reaction is a quinone + NADH + 5 H(+)(in) = a quinol + NAD(+) + 4 H(+)(out). In terms of biological role, NDH-1 shuttles electrons from NADH, via FMN and iron-sulfur (Fe-S) centers, to quinones in the respiratory chain. Couples the redox reaction to proton translocation (for every two electrons transferred, four hydrogen ions are translocated across the cytoplasmic membrane), and thus conserves the redox energy in a proton gradient. This chain is NADH-quinone oxidoreductase subunit G (nuoG), found in Buchnera aphidicola subsp. Baizongia pistaciae (strain Bp).